We begin with the raw amino-acid sequence, 608 residues long: Aspartate--tRNA(Asp/Asn) ligase (608 aa).

L-aspartate is bound at residue glutamate 187. The segment at 211–214 (QQFK) is aspartate. 2 residues coordinate L-aspartate: arginine 233 and histidine 461. Residue 233–235 (RDE) participates in ATP binding. Glutamate 495 lines the ATP pocket. Arginine 502 is an L-aspartate binding site. An ATP-binding site is contributed by 547–550 (GLDR).

The protein belongs to the class-II aminoacyl-tRNA synthetase family. Type 1 subfamily. Homodimer.

Its subcellular location is the cytoplasm. It catalyses the reaction tRNA(Asx) + L-aspartate + ATP = L-aspartyl-tRNA(Asx) + AMP + diphosphate. Functionally, aspartyl-tRNA synthetase with relaxed tRNA specificity since it is able to aspartylate not only its cognate tRNA(Asp) but also tRNA(Asn). Reaction proceeds in two steps: L-aspartate is first activated by ATP to form Asp-AMP and then transferred to the acceptor end of tRNA(Asp/Asn). This Prosthecochloris aestuarii (strain DSM 271 / SK 413) protein is Aspartate--tRNA(Asp/Asn) ligase.